Reading from the N-terminus, the 304-residue chain is Quinolinate synthase (304 aa).

Residues His-23 and Ser-40 each coordinate iminosuccinate. Residue Cys-85 participates in [4Fe-4S] cluster binding. Iminosuccinate contacts are provided by residues 111–113 (YVN) and Ser-128. Cys-171 contributes to the [4Fe-4S] cluster binding site. Iminosuccinate contacts are provided by residues 197 to 199 (HPE) and Thr-214. Cys-259 lines the [4Fe-4S] cluster pocket.

The protein belongs to the quinolinate synthase family. Type 2 subfamily. [4Fe-4S] cluster is required as a cofactor.

The protein localises to the cytoplasm. It carries out the reaction iminosuccinate + dihydroxyacetone phosphate = quinolinate + phosphate + 2 H2O + H(+). Its pathway is cofactor biosynthesis; NAD(+) biosynthesis; quinolinate from iminoaspartate: step 1/1. Catalyzes the condensation of iminoaspartate with dihydroxyacetone phosphate to form quinolinate. The sequence is that of Quinolinate synthase from Pelobacter propionicus (strain DSM 2379 / NBRC 103807 / OttBd1).